We begin with the raw amino-acid sequence, 185 residues long: Ribosome-recycling factor (185 aa).

The protein belongs to the RRF family.

It is found in the cytoplasm. Its function is as follows. Responsible for the release of ribosomes from messenger RNA at the termination of protein biosynthesis. May increase the efficiency of translation by recycling ribosomes from one round of translation to another. The chain is Ribosome-recycling factor from Pseudomonas putida (strain GB-1).